Reading from the N-terminus, the 222-residue chain is MVRVTFLGHSAFLLEGSKRVLIDPWIEGNPQSPIKIEECKGADVYIVTHDHGDHGLEDAIKLSKRHGGTVVSIYEIAEEARRKGANSLGANIGSFFEVNGVKVVLTKALHSSNLGAPVGAVIELDGKRVYHAGDTGVFYDMKIIGELYKPDLALLPIGGHFVMGPLEASLAIELLGVSKVIPMHYQTFPVLKGKPEELKEHLGRRGIKAEIIALKPGESYEL.

It belongs to the UPF0173 family.

This Korarchaeum cryptofilum (strain OPF8) protein is UPF0173 metal-dependent hydrolase Kcr_0055.